Here is a 561-residue protein sequence, read N- to C-terminus: Putative transport protein YbjL (561 aa).

5 helical membrane-spanning segments follow: residues 8–28 (LLNG…LCLG), 32–52 (LGSV…LLGQ), 66–86 (FMLF…SIFF), 94–114 (MLAL…GKLF), and 158–178 (NLSL…IVGA). 2 RCK C-terminal domains span residues 200–288 (RGLD…SLRN) and 292–373 (VFDR…RIGF). 5 helical membrane passes run 383–403 (LLAF…TFQF), 406–426 (FSFG…LGFL), 447–467 (FGLM…ISNG), 475–495 (MLIA…LFGA), and 540–560 (AIAN…WPGL).

It belongs to the AAE transporter (TC 2.A.81) family. YbjL subfamily.

The protein resides in the cell membrane. This is Putative transport protein YbjL from Salmonella gallinarum (strain 287/91 / NCTC 13346).